We begin with the raw amino-acid sequence, 504 residues long: Kinesin light chain 3 (504 aa).

A coiled-coil region spans residues 90-150 (ALSAHVGALE…EEEKRHLEFL (61 aa)). A disordered region spans residues 153 to 197 (LRQYDPPAESQQSESPPRRDSLASLFPSEEEERKGPEAAGAAAAQ). Over residues 158–167 (PPAESQQSES) the composition is skewed to low complexity. S173 carries the phosphoserine modification. TPR repeat units follow at residues 207 to 240 (LRTL…LERS), 249 to 282 (ATML…REQT), 291 to 324 (AATL…REKV), 333 to 366 (AKQL…YEAL), and 375 to 408 (AKTK…EDLP). A disordered region spans residues 411 to 438 (LGAPNTGTAGDAEQALRRSSSLSKIRES). S466 is subject to Phosphoserine. The interval 472-504 (VDAPRAPGTQFPSWHLDKAPRTLSASTQDLSPH) is disordered. Polar residues predominate over residues 494–504 (LSASTQDLSPH). T498 carries the post-translational modification Phosphothreonine. S502 is modified (phosphoserine).

Belongs to the kinesin light chain family. In terms of assembly, oligomer composed of two heavy chains and two light chains. Associates with microtubulin in an ATP-dependent manner. Interacts with KIF5C. Interacts with ODF1. Interacts with LRGUK. Interacts with VDAC2.

The protein resides in the cytoplasm. It localises to the cytoskeleton. It is found in the mitochondrion. In terms of biological role, kinesin is a microtubule-associated force-producing protein that may play a role in organelle transport. Plays a role during spermiogenesis in the development of the sperm tail midpiece and in the normal function of spermatozoa. May play a role in the formation of the mitochondrial sheath formation in the developing spermatid midpiece. In Homo sapiens (Human), this protein is Kinesin light chain 3 (KLC3).